The sequence spans 210 residues: Prolactin (210 aa).

A signal peptide spans 1-23; that stretch reads MARRSQGTKLHLAVLCLVVSCHA. Intrachain disulfides connect cysteine 69/cysteine 183 and cysteine 200/cysteine 210.

This sequence belongs to the somatotropin/prolactin family.

The protein localises to the secreted. The sequence is that of Prolactin (prl) from Oncorhynchus mykiss (Rainbow trout).